The following is a 283-amino-acid chain: Bifunctional protein FolD (283 aa).

166-168 serves as a coordination point for NADP(+); it reads GAS.

The protein belongs to the tetrahydrofolate dehydrogenase/cyclohydrolase family. Homodimer.

It carries out the reaction (6R)-5,10-methylene-5,6,7,8-tetrahydrofolate + NADP(+) = (6R)-5,10-methenyltetrahydrofolate + NADPH. The enzyme catalyses (6R)-5,10-methenyltetrahydrofolate + H2O = (6R)-10-formyltetrahydrofolate + H(+). It participates in one-carbon metabolism; tetrahydrofolate interconversion. In terms of biological role, catalyzes the oxidation of 5,10-methylenetetrahydrofolate to 5,10-methenyltetrahydrofolate and then the hydrolysis of 5,10-methenyltetrahydrofolate to 10-formyltetrahydrofolate. The polypeptide is Bifunctional protein FolD (Coxiella burnetii (strain CbuK_Q154) (Coxiella burnetii (strain Q154))).